The following is a 2920-amino-acid chain: Cadherin-related hmr-1 (2920 aa).

Residues 1-19 form the signal peptide; sequence MSWNILLILLISNLDEVLA. At 20–2779 the chain is on the extracellular side; the sequence is KTLLKLPSNA…AVSKLGISSP (2760 aa). 5 N-linked (GlcNAc...) asparagine glycosylation sites follow: Asn-72, Asn-243, Asn-253, Asn-339, and Asn-508. Cadherin domains are found at residues 322-422, 425-530, 531-642, 643-747, 749-865, 871-979, 980-1093, 1097-1211, 1212-1335, 1336-1436, 1438-1546, 1548-1661, 1662-1772, and 1772-1874; these read SSRS…PPSF, SPLP…PPQF, AKQE…VPTF, TRPL…SAVF, PTSQ…KPEF, YSDI…SPQF, ERPS…APKW, PDCK…VPQF, TVDL…APSF, EEQK…APQF, QQKY…SPIF, ERLF…APFF, EKTR…APHI, and IHGA…EPYT. Asn-658, Asn-685, Asn-715, and Asn-826 each carry an N-linked (GlcNAc...) asparagine glycan. N-linked (GlcNAc...) asparagine glycosylation is present at Asn-1177. Residue Asn-1417 is glycosylated (N-linked (GlcNAc...) asparagine). Asn-1646 is a glycosylation site (N-linked (GlcNAc...) asparagine). N-linked (GlcNAc...) asparagine glycosylation is found at Asn-1935, Asn-2224, and Asn-2232. Residues 2246 to 2283 form the EGF-like 1 domain; it reads APPACQHSLCHNDGVCHNTNPGFFCECRNDGLKGARCQ. Cystine bridges form between Cys-2250/Cys-2261, Cys-2255/Cys-2270, and Cys-2272/Cys-2282. The Laminin G-like domain maps to 2284-2478; the sequence is GTTRSFGGNG…AFEQNSEKGC (195 aa). 2 N-linked (GlcNAc...) asparagine glycosylation sites follow: Asn-2307 and Asn-2332. Cystine bridges form between Cys-2452-Cys-2478, Cys-2501-Cys-2515, and Cys-2517-Cys-2526. An EGF-like 2 domain is found at 2492 to 2527; the sequence is SLNHCIHGDCFADVQGSGAMVAKCVCDPGWGGARCE. N-linked (GlcNAc...) asparagine glycosylation is present at Asn-2623. Residues 2780-2800 traverse the membrane as a helical segment; the sequence is AIILILVSLALLILLVMMMVV. Residues 2801–2920 lie on the Cytoplasmic side of the membrane; sequence YTRRSPGAFE…VTLESIESAQ (120 aa). Phosphoserine is present on Ser-2839. The interval 2858 to 2891 is disordered; the sequence is IGGHPPHYPPRGMAPPKDDHELNSKIKDLETDQN. Residues 2873–2887 show a composition bias toward basic and acidic residues; it reads PKDDHELNSKIKDLE. Ser-2909 is subject to Phosphoserine. Thr-2912 is subject to Phosphothreonine. 2 positions are modified to phosphoserine: Ser-2915 and Ser-2918.

Monomer in solution. Isoform a is a component of a core catenin-cadherin complex consisting of hmr-1, hmp-1 and hmp-2; the complex localizes to adherens junctions. Isoform a interacts with hmp-2; the interaction is direct. Isoform a interacts (via intracellular domain) with jac-1. Post-translationally, phosphorylation at T-2912 increases the binding affinity for hmp-2. In terms of processing, sumoylated. Sumoylation prevents accumulation at adherens junctions and decreases the binding affinity for hmp-2. Expressed in epidermal cells (at protein level). As to expression, neuron-specific.

It is found in the cell membrane. The protein localises to the cell junction. It localises to the adherens junction. Its subcellular location is the cell projection. The protein resides in the dendrite. In terms of biological role, cadherins are calcium-dependent cell adhesion proteins. They preferentially interact with themselves in a homophilic manner in connecting cells; cadherins may thus contribute to the sorting of heterogeneous cell types. Required for adherens junction assembly and connecting adherens junctions to the cytoskeleton. Its function is as follows. Isoform a is required for cell migration during body enclosure and cell shape changes during body elongation. Required for proper localization of other junctional components, such as hmp-1, hmp-2, jac-1 and pac-1. Recruitment of pac-1 is required to establish cell polarity, independent of its role in cell adhesion. Required for primodial germ cell ingression and adherence to endodermal cells during gastrulation. Isoform b is involved in axonal guidance in a subset of motor neurons. The sequence is that of Cadherin-related hmr-1 from Caenorhabditis elegans.